The following is a 224-amino-acid chain: Thiamine-phosphate synthase (224 aa).

Residues 41 to 45 and aspartate 77 contribute to the 4-amino-2-methyl-5-(diphosphooxymethyl)pyrimidine site; that span reads QFRDK. Mg(2+)-binding residues include aspartate 78 and aspartate 97. Residue serine 116 coordinates 4-amino-2-methyl-5-(diphosphooxymethyl)pyrimidine. 143 to 145 is a 2-[(2R,5Z)-2-carboxy-4-methylthiazol-5(2H)-ylidene]ethyl phosphate binding site; that stretch reads TNS. Lysine 146 provides a ligand contact to 4-amino-2-methyl-5-(diphosphooxymethyl)pyrimidine. 2-[(2R,5Z)-2-carboxy-4-methylthiazol-5(2H)-ylidene]ethyl phosphate contacts are provided by residues glycine 174 and 194–195; that span reads IS.

This sequence belongs to the thiamine-phosphate synthase family. It depends on Mg(2+) as a cofactor.

The catalysed reaction is 2-[(2R,5Z)-2-carboxy-4-methylthiazol-5(2H)-ylidene]ethyl phosphate + 4-amino-2-methyl-5-(diphosphooxymethyl)pyrimidine + 2 H(+) = thiamine phosphate + CO2 + diphosphate. It catalyses the reaction 2-(2-carboxy-4-methylthiazol-5-yl)ethyl phosphate + 4-amino-2-methyl-5-(diphosphooxymethyl)pyrimidine + 2 H(+) = thiamine phosphate + CO2 + diphosphate. The enzyme catalyses 4-methyl-5-(2-phosphooxyethyl)-thiazole + 4-amino-2-methyl-5-(diphosphooxymethyl)pyrimidine + H(+) = thiamine phosphate + diphosphate. It functions in the pathway cofactor biosynthesis; thiamine diphosphate biosynthesis; thiamine phosphate from 4-amino-2-methyl-5-diphosphomethylpyrimidine and 4-methyl-5-(2-phosphoethyl)-thiazole: step 1/1. In terms of biological role, condenses 4-methyl-5-(beta-hydroxyethyl)thiazole monophosphate (THZ-P) and 2-methyl-4-amino-5-hydroxymethyl pyrimidine pyrophosphate (HMP-PP) to form thiamine monophosphate (TMP). The polypeptide is Thiamine-phosphate synthase (Latilactobacillus sakei subsp. sakei (strain 23K) (Lactobacillus sakei subsp. sakei)).